The chain runs to 101 residues: Small ribosomal subunit protein uS14 (101 aa).

It belongs to the universal ribosomal protein uS14 family. As to quaternary structure, part of the 30S ribosomal subunit. Contacts proteins S3 and S10.

In terms of biological role, binds 16S rRNA, required for the assembly of 30S particles and may also be responsible for determining the conformation of the 16S rRNA at the A site. The sequence is that of Small ribosomal subunit protein uS14 from Serratia proteamaculans (strain 568).